Reading from the N-terminus, the 230-residue chain is Large ribosomal subunit protein uL1 (230 aa).

This sequence belongs to the universal ribosomal protein uL1 family. Part of the 50S ribosomal subunit.

Its function is as follows. Binds directly to 23S rRNA. The L1 stalk is quite mobile in the ribosome, and is involved in E site tRNA release. In terms of biological role, protein L1 is also a translational repressor protein, it controls the translation of the L11 operon by binding to its mRNA. The polypeptide is Large ribosomal subunit protein uL1 (Bifidobacterium adolescentis (strain ATCC 15703 / DSM 20083 / NCTC 11814 / E194a)).